The sequence spans 78 residues: Large ribosomal subunit protein bL28 (78 aa).

Belongs to the bacterial ribosomal protein bL28 family.

The chain is Large ribosomal subunit protein bL28 from Prochlorococcus marinus (strain MIT 9211).